A 383-amino-acid polypeptide reads, in one-letter code: Succinyl-diaminopimelate desuccinylase (383 aa).

Zn(2+) is bound at residue H73. D75 is an active-site residue. D107 contributes to the Zn(2+) binding site. The active-site Proton acceptor is E141. Positions 142, 170, and 356 each coordinate Zn(2+).

The protein belongs to the peptidase M20A family. DapE subfamily. In terms of assembly, homodimer. Zn(2+) serves as cofactor. Co(2+) is required as a cofactor.

It carries out the reaction N-succinyl-(2S,6S)-2,6-diaminopimelate + H2O = (2S,6S)-2,6-diaminopimelate + succinate. It functions in the pathway amino-acid biosynthesis; L-lysine biosynthesis via DAP pathway; LL-2,6-diaminopimelate from (S)-tetrahydrodipicolinate (succinylase route): step 3/3. In terms of biological role, catalyzes the hydrolysis of N-succinyl-L,L-diaminopimelic acid (SDAP), forming succinate and LL-2,6-diaminopimelate (DAP), an intermediate involved in the bacterial biosynthesis of lysine and meso-diaminopimelic acid, an essential component of bacterial cell walls. The protein is Succinyl-diaminopimelate desuccinylase of Pseudomonas putida (strain ATCC 700007 / DSM 6899 / JCM 31910 / BCRC 17059 / LMG 24140 / F1).